A 180-amino-acid polypeptide reads, in one-letter code: ATP synthase subunit delta (180 aa).

The protein belongs to the ATPase delta chain family. In terms of assembly, F-type ATPases have 2 components, F(1) - the catalytic core - and F(0) - the membrane proton channel. F(1) has five subunits: alpha(3), beta(3), gamma(1), delta(1), epsilon(1). F(0) has three main subunits: a(1), b(2) and c(10-14). The alpha and beta chains form an alternating ring which encloses part of the gamma chain. F(1) is attached to F(0) by a central stalk formed by the gamma and epsilon chains, while a peripheral stalk is formed by the delta and b chains.

It is found in the cell membrane. Its function is as follows. F(1)F(0) ATP synthase produces ATP from ADP in the presence of a proton or sodium gradient. F-type ATPases consist of two structural domains, F(1) containing the extramembraneous catalytic core and F(0) containing the membrane proton channel, linked together by a central stalk and a peripheral stalk. During catalysis, ATP synthesis in the catalytic domain of F(1) is coupled via a rotary mechanism of the central stalk subunits to proton translocation. Functionally, this protein is part of the stalk that links CF(0) to CF(1). It either transmits conformational changes from CF(0) to CF(1) or is implicated in proton conduction. The chain is ATP synthase subunit delta from Latilactobacillus sakei subsp. sakei (strain 23K) (Lactobacillus sakei subsp. sakei).